A 423-amino-acid polypeptide reads, in one-letter code: Isovaleryl-CoA dehydrogenase, mitochondrial (423 aa).

The transit peptide at 1–29 (MATATRLLGWRVASWRMRPPPAGFVSQRA) directs the protein to the mitochondrion. N6-acetyllysine; alternate occurs at positions 55, 64, and 75. N6-succinyllysine; alternate occurs at positions 55, 64, and 75. FAD is bound by residues 162–171 (LAMSEPNAGS) and 195–197 (WIT). S171 serves as a coordination point for substrate. 219–220 (SR) serves as a coordination point for substrate. K238 is modified (N6-acetyllysine). K259 is subject to N6-acetyllysine; alternate. Residue K259 is modified to N6-succinyllysine; alternate. Substrate-binding positions include Y274 and 281-284 (DLER). The Proton acceptor role is filled by E283. FAD is bound at residue R309. N6-succinyllysine is present on K315. FAD-binding positions include Q320 and 377–381 (QCFGG). 404–405 (AG) serves as a coordination point for substrate. Residue 406–408 (TSE) coordinates FAD.

Belongs to the acyl-CoA dehydrogenase family. In terms of assembly, homotetramer. The cofactor is FAD.

The protein resides in the mitochondrion matrix. The catalysed reaction is 3-methylbutanoyl-CoA + oxidized [electron-transfer flavoprotein] + H(+) = 3-methylbut-2-enoyl-CoA + reduced [electron-transfer flavoprotein]. It carries out the reaction pentanoyl-CoA + oxidized [electron-transfer flavoprotein] + H(+) = (2E)-pentenoyl-CoA + reduced [electron-transfer flavoprotein]. It catalyses the reaction hexanoyl-CoA + oxidized [electron-transfer flavoprotein] + H(+) = (2E)-hexenoyl-CoA + reduced [electron-transfer flavoprotein]. The enzyme catalyses butanoyl-CoA + oxidized [electron-transfer flavoprotein] + H(+) = (2E)-butenoyl-CoA + reduced [electron-transfer flavoprotein]. It participates in amino-acid degradation; L-leucine degradation; (S)-3-hydroxy-3-methylglutaryl-CoA from 3-isovaleryl-CoA: step 1/3. Its function is as follows. Catalyzes the conversion of isovaleryl-CoA/3-methylbutanoyl-CoA to 3-methylbut-2-enoyl-CoA as an intermediate step in the leucine (Leu) catabolic pathway. To a lesser extent, is also able to catalyze the oxidation of other saturated short-chain acyl-CoA thioesters as pentanoyl-CoA, hexenoyl-CoA and butenoyl-CoA. This Pongo abelii (Sumatran orangutan) protein is Isovaleryl-CoA dehydrogenase, mitochondrial (IVD).